Here is a 148-residue protein sequence, read N- to C-terminus: Ubiquitin-conjugating enzyme E2 10 (148 aa).

Residues 1 to 147 (MASKRILKEL…ARSWTQKYAM (147 aa)) enclose the UBC core domain. Cys85 acts as the Glycyl thioester intermediate in catalysis.

Belongs to the ubiquitin-conjugating enzyme family. As to quaternary structure, interacts with CHIP and the E3 ubiquitin ligase BB. Associates with the E3 ubiquitin ligase JMJ24. In terms of tissue distribution, ubiquitously expressed with the highest levels in rosette leaves, roots and petals.

The catalysed reaction is S-ubiquitinyl-[E1 ubiquitin-activating enzyme]-L-cysteine + [E2 ubiquitin-conjugating enzyme]-L-cysteine = [E1 ubiquitin-activating enzyme]-L-cysteine + S-ubiquitinyl-[E2 ubiquitin-conjugating enzyme]-L-cysteine.. It participates in protein modification; protein ubiquitination. Functionally, accepts the ubiquitin from the E1 complex and catalyzes its covalent attachment to other proteins. Mediates the selective degradation of short-lived and abnormal proteins. This is Ubiquitin-conjugating enzyme E2 10 from Arabidopsis thaliana (Mouse-ear cress).